The sequence spans 123 residues: Large ribosomal subunit protein uL29 (123 aa).

This sequence belongs to the universal ribosomal protein uL29 family.

The protein is Large ribosomal subunit protein uL29 (rpl-35) of Caenorhabditis elegans.